We begin with the raw amino-acid sequence, 374 residues long: Beta-lytic metalloendopeptidase (374 aa).

The first 24 residues, 1–24, serve as a signal peptide directing secretion; the sequence is MKKISKAGLGLALVCALATIGGNA. A propeptide spanning residues 25–195 is cleaved from the precursor; sequence ARRATAQRRG…RQGRPGRAAV (171 aa). Positions 128-187 are disordered; the sequence is PTRQGAGDAGPRQSAAGAVRAFRRQRAGGRAARRRRVPAGLRPPVQRTAPGQGGFGPLRQ. Positions 148–164 are enriched in basic residues; it reads AFRRQRAGGRAARRRRV. The cysteines at positions 261 and 307 are disulfide-linked. Zn(2+) contacts are provided by His-316 and His-318. An intrachain disulfide couples Cys-351 to Cys-364.

The protein belongs to the peptidase M23A family. Requires Zn(2+) as cofactor.

The protein localises to the secreted. The catalysed reaction is Cleavage of N-acetylmuramoyl-|-Ala, and of the insulin B chain at 23-Gly-|-Phe-24 &gt; 18-Val-|-Cys(SO3H).. The polypeptide is Beta-lytic metalloendopeptidase (Achromobacter lyticus).